A 300-amino-acid polypeptide reads, in one-letter code: Free fatty acid receptor 1 (300 aa).

Residues 1–8 (MALSPQLF) lie on the Extracellular side of the membrane. A helical transmembrane segment spans residues 9–31 (FALYVSAFALGFPLNLLAIRGAV). At 32-41 (ARARLRLTPN) the chain is on the cytoplasmic side. The helical transmembrane segment at 42-64 (LVYTLHLACSDLLLAITLPVKAV) threads the bilayer. Over 65-79 (EALASGAWPLPLPLC) the chain is Extracellular. Cysteine 79 and cysteine 170 form a disulfide bridge. Residues 80-101 (PVFVLVHFAPLYAGGGFLAALS) traverse the membrane as a helical segment. The Cytoplasmic segment spans residues 102–121 (AGRYLGAAFPFGYQAVRRPR). The helical transmembrane segment at 122-142 (YSWGVCVAIWALVLCHMGLVL) threads the bilayer. The Extracellular portion of the chain corresponds to 143 to 178 (GLEAPGGWLNTTSSSLGINTPVNGSPVCLEAWDPNS). N-linked (GlcNAc...) asparagine glycosylation is present at asparagine 152. The chain crosses the membrane as a helical span at residues 179 to 200 (ARPARLSFSILLFFVPLVITAF). Residues 201 to 223 (CYVGCLRALAHSGLSHKRKLRAA) lie on the Cytoplasmic side of the membrane. Residues 224–248 (WAAGGAFLTLLLCLGPYNASNVASF) form a helical membrane-spanning segment. Over 249-256 (VNPDLGGS) the chain is Extracellular. Residues 257–279 (WRKLGLITGSWSVVLNPLVTGYL) traverse the membrane as a helical segment. Residues 280–300 (GASPGRGTVCTTRTQGGTIQK) are Cytoplasmic-facing.

Belongs to the G-protein coupled receptor 1 family.

It is found in the cell membrane. In terms of biological role, G-protein coupled receptor for medium and long chain saturated and unsaturated fatty acids that plays an important role in glucose homeostasis. Fatty acid binding increases glucose-stimulated insulin secretion, and may also enhance the secretion of glucagon-like peptide 1 (GLP-1). May also play a role in bone homeostasis; receptor signaling activates pathways that inhibit osteoclast differentiation. Ligand binding leads to a conformation change that triggers signaling via G-proteins that activate phospholipase C, leading to an increase of the intracellular calcium concentration. Seems to act through a G(q) and G(i)-mediated pathway. Mediates the anti-inflammatory effects of omega-3 polyunsaturated fatty acids (PUFAs) via inhibition of NLRP3 inflammasome activation. This is Free fatty acid receptor 1 (FFAR1) from Mesocricetus auratus (Golden hamster).